A 142-amino-acid polypeptide reads, in one-letter code: Large ribosomal subunit protein uL13 (142 aa).

Belongs to the universal ribosomal protein uL13 family. Part of the 50S ribosomal subunit.

In terms of biological role, this protein is one of the early assembly proteins of the 50S ribosomal subunit, although it is not seen to bind rRNA by itself. It is important during the early stages of 50S assembly. This chain is Large ribosomal subunit protein uL13, found in Burkholderia cenocepacia (strain ATCC BAA-245 / DSM 16553 / LMG 16656 / NCTC 13227 / J2315 / CF5610) (Burkholderia cepacia (strain J2315)).